The following is a 100-amino-acid chain: Urease subunit gamma (100 aa).

This sequence belongs to the urease gamma subunit family. As to quaternary structure, heterotrimer of UreA (gamma), UreB (beta) and UreC (alpha) subunits. Three heterotrimers associate to form the active enzyme.

It is found in the cytoplasm. The catalysed reaction is urea + 2 H2O + H(+) = hydrogencarbonate + 2 NH4(+). The protein operates within nitrogen metabolism; urea degradation; CO(2) and NH(3) from urea (urease route): step 1/1. The protein is Urease subunit gamma of Kocuria rhizophila (strain ATCC 9341 / DSM 348 / NBRC 103217 / DC2201).